The chain runs to 344 residues: tRNA(Ile)-lysidine synthase (344 aa).

35-40 is an ATP binding site; that stretch reads SGGPDS.

It belongs to the tRNA(Ile)-lysidine synthase family.

The protein localises to the cytoplasm. The catalysed reaction is cytidine(34) in tRNA(Ile2) + L-lysine + ATP = lysidine(34) in tRNA(Ile2) + AMP + diphosphate + H(+). Its function is as follows. Ligates lysine onto the cytidine present at position 34 of the AUA codon-specific tRNA(Ile) that contains the anticodon CAU, in an ATP-dependent manner. Cytidine is converted to lysidine, thus changing the amino acid specificity of the tRNA from methionine to isoleucine. The sequence is that of tRNA(Ile)-lysidine synthase from Methylobacterium sp. (strain 4-46).